The following is a 249-amino-acid chain: Diphthine synthase (249 aa).

Residues Asp83, Leu86, 111–112, Leu163, and Leu205 each bind S-adenosyl-L-methionine; that span reads SI.

This sequence belongs to the diphthine synthase family. Homodimer.

It carries out the reaction 2-[(3S)-amino-3-carboxypropyl]-L-histidyl-[translation elongation factor 2] + 3 S-adenosyl-L-methionine = diphthine-[translation elongation factor 2] + 3 S-adenosyl-L-homocysteine + 3 H(+). Its pathway is protein modification; peptidyl-diphthamide biosynthesis. Its function is as follows. S-adenosyl-L-methionine-dependent methyltransferase that catalyzes the trimethylation of the amino group of the modified target histidine residue in translation elongation factor 2 (EF-2), to form an intermediate called diphthine. The three successive methylation reactions represent the second step of diphthamide biosynthesis. This is Diphthine synthase from Pyrobaculum islandicum (strain DSM 4184 / JCM 9189 / GEO3).